Reading from the N-terminus, the 459-residue chain is MGKEKTHINIVVIGHVDSGKSTTTGHLIYKCGGIDKRTIEKFEKEAQEMGKGSFKYAWVLDKLKAERERGITIDIALWKFETAKFYVTIIDAPGHRDFIKKMITGTSQADCAVLVVACGTGEFEAGISKNGQTREHALLAQTLGVKQMIVACNKMDSTEPPFSEKRFEEIITEVKSFIKKIGYNPATIPFVPISGFNGDNMLEPSANMSWYKGWSVERKEGNASGKTLLEALDCIIPPQRPTDRPLRLPLQDVYKIGGIGTVPVGRVETGVIKPGMVVTFAPQNVTTEVKSVEMHHESLPEAQPGDNVGFNVKNVSVKDIRRGSVCSDSKNDPAKESKSFTAQVIVMNHPGQIGAGYTPVLDCHTAHIACKFAELKEKVDRRTGKKVEDLPKFLKSGDAGIVELIPTKPLCVEAFTDYAPLGRFAVRDMRQTVAVGVIKGVTKDDGSGGKVTKSAAKKK.

One can recognise a tr-type G domain in the interval 5 to 242 (KTHINIVVIG…DCIIPPQRPT (238 aa)). Residues 14 to 21 (GHVDSGKS) form a G1 region. Residues 70–74 (GITID) form a G2 region. The interval 91–94 (DAPG) is G3. The G4 stretch occupies residues 153 to 156 (NKMD). A G5 region spans residues 194–196 (SGF). 5-glutamyl glycerylphosphorylethanolamine is present on residues glutamate 301 and glutamate 374.

Belongs to the TRAFAC class translation factor GTPase superfamily. Classic translation factor GTPase family. EF-Tu/EF-1A subfamily.

It is found in the cytoplasm. This protein promotes the GTP-dependent binding of aminoacyl-tRNA to the A-site of ribosomes during protein biosynthesis. This is Elongation factor 1-alpha 1 (eft-1) from Oscheius tipulae.